Here is a 170-residue protein sequence, read N- to C-terminus: Small ribosomal subunit protein bS18c (170 aa).

The segment at 1-61 is disordered; sequence MYTSKQPFLK…RRPRIGPGDR (61 aa). The span at 13–26 shows a compositional bias: polar residues; that stretch reads QPFSKSKQTFNKSK. Residues 27–55 are compositionally biased toward basic residues; that stretch reads QPFRKSKQTFRKFKQPFRKSKQPFRRRPR.

It belongs to the bacterial ribosomal protein bS18 family. Part of the 30S ribosomal subunit.

Its subcellular location is the plastid. It is found in the chloroplast. This is Small ribosomal subunit protein bS18c from Hordeum vulgare (Barley).